We begin with the raw amino-acid sequence, 197 residues long: Ras-related protein RabG2 (197 aa).

Residues 13-20 (GDSAVGKT), 61-65 (DTAGQ), and 119-122 (NKCD) each bind GTP. The interval 175 to 197 (SKPSVVNPGSGGTSNTGGKKKFC) is disordered. The S-geranylgeranyl cysteine moiety is linked to residue Cys197.

The protein belongs to the small GTPase superfamily. Rab family.

The protein resides in the cell membrane. The chain is Ras-related protein RabG2 (rabG2) from Dictyostelium discoideum (Social amoeba).